The primary structure comprises 429 residues: Adenylosuccinate synthetase (429 aa).

GTP contacts are provided by residues 12–18 (GDEGKGK) and 40–42 (GHT). Residue aspartate 13 is the Proton acceptor of the active site. Aspartate 13 and glycine 40 together coordinate Mg(2+). IMP-binding positions include 13-16 (DEGK), 38-41 (NAGH), threonine 128, arginine 142, glutamine 223, threonine 238, and arginine 302. Catalysis depends on histidine 41, which acts as the Proton donor. 298 to 304 (TTTGRPR) is a binding site for substrate. Residues arginine 304, 330–332 (SID), and 412–414 (SVG) contribute to the GTP site.

This sequence belongs to the adenylosuccinate synthetase family. Homodimer. It depends on Mg(2+) as a cofactor.

The protein resides in the cytoplasm. The catalysed reaction is IMP + L-aspartate + GTP = N(6)-(1,2-dicarboxyethyl)-AMP + GDP + phosphate + 2 H(+). It functions in the pathway purine metabolism; AMP biosynthesis via de novo pathway; AMP from IMP: step 1/2. Plays an important role in the de novo pathway of purine nucleotide biosynthesis. Catalyzes the first committed step in the biosynthesis of AMP from IMP. This is Adenylosuccinate synthetase from Bacillus cereus (strain ATCC 14579 / DSM 31 / CCUG 7414 / JCM 2152 / NBRC 15305 / NCIMB 9373 / NCTC 2599 / NRRL B-3711).